The following is a 522-amino-acid chain: Glutathione reductase, mitochondrial (522 aa).

The N-terminal 43 residues, 1–43, are a transit peptide targeting the mitochondrion; the sequence is MALLPRALSAGAGPSWRRAARAFRGFLLLLPEPAALTRALSRA. FAD-binding residues include Ser-74 and Gly-75. Ser-74 contributes to the glutathione binding site. Residue Arg-81 coordinates glutathione. Residue Glu-94 participates in FAD binding. Lys-97 bears the N6-acetyllysine mark. FAD is bound by residues Thr-101, Cys-102, and Lys-110. The cysteines at positions 102 and 107 are disulfide-linked. Residue Tyr-158 coordinates glutathione. Residue Ala-174 participates in FAD binding. Residues Ala-239, Ile-242, Glu-245, Arg-262, Arg-268, and Gly-334 each contribute to the NADP(+) site. Asp-375 is a binding site for FAD. Leu-381 is a binding site for NADP(+). Thr-383 is an FAD binding site. A glutathione-binding site is contributed by Arg-391. NADP(+) is bound at residue Val-414. An FAD-binding site is contributed by His-511. His-511 (proton acceptor) is an active-site residue.

The protein belongs to the class-I pyridine nucleotide-disulfide oxidoreductase family. As to quaternary structure, homodimer; disulfide-linked. FAD serves as cofactor.

The protein localises to the mitochondrion. The protein resides in the cytoplasm. The enzyme catalyses 2 glutathione + NADP(+) = glutathione disulfide + NADPH + H(+). Catalyzes the reduction of glutathione disulfide (GSSG) to reduced glutathione (GSH). Constitutes the major mechanism to maintain a high GSH:GSSG ratio in the cytosol. This is Glutathione reductase, mitochondrial (GSR) from Homo sapiens (Human).